The following is a 349-amino-acid chain: UDP-3-O-acylglucosamine N-acyltransferase (349 aa).

The active-site Proton acceptor is the His246.

This sequence belongs to the transferase hexapeptide repeat family. LpxD subfamily. In terms of assembly, homotrimer.

It catalyses the reaction a UDP-3-O-[(3R)-3-hydroxyacyl]-alpha-D-glucosamine + a (3R)-hydroxyacyl-[ACP] = a UDP-2-N,3-O-bis[(3R)-3-hydroxyacyl]-alpha-D-glucosamine + holo-[ACP] + H(+). It functions in the pathway bacterial outer membrane biogenesis; LPS lipid A biosynthesis. Its function is as follows. Catalyzes the N-acylation of UDP-3-O-acylglucosamine using 3-hydroxyacyl-ACP as the acyl donor. Is involved in the biosynthesis of lipid A, a phosphorylated glycolipid that anchors the lipopolysaccharide to the outer membrane of the cell. The chain is UDP-3-O-acylglucosamine N-acyltransferase from Nostoc sp. (strain PCC 7120 / SAG 25.82 / UTEX 2576).